A 224-amino-acid polypeptide reads, in one-letter code: Ras-related protein RABA4b (224 aa).

Ala2 is subject to N-acetylalanine. 24–31 contributes to the GTP binding site; sequence GDSAVGKS. An Effector region motif is present at residues 46–54; the sequence is SKATIGVEF. GTP is bound by residues 72-76, 130-133, and 160-161; these read DTAGQ, NKSD, and SA. Residues Cys220 and Cys221 are each lipidated (S-geranylgeranyl cysteine).

It belongs to the small GTPase superfamily. Rab family. Interacts with TCTP1. As to expression, expressed in roots, stems, leaves and flowers. Expressed in tips of growing root hair cells.

The protein localises to the early endosome membrane. It localises to the golgi apparatus. Its subcellular location is the trans-Golgi network membrane. Regulator of membrane trafficking. May be required for secretion of cell wall components in cells. The polypeptide is Ras-related protein RABA4b (Arabidopsis thaliana (Mouse-ear cress)).